The sequence spans 314 residues: BRCA2 and CDKN1A-interacting protein (314 aa).

The disordered stretch occupies residues M1–E56. Residues D25–E56 are compositionally biased toward acidic residues. 2 positions are modified to phosphoserine: S42 and S112. Residues I59–K167 are interaction with BRCA2. The interaction with CDKN1A stretch occupies residues M161–K259. S281 is subject to Phosphoserine.

The protein belongs to the BCP1 family. Interacts with BRCA2, CDKN1A and MTDH/LYRIC. Isoform 2/alpha, but not isoform 1/beta, interacts with DCTN1/p150-glued and ACTR1A/ARP1. Both isoform 1 and isoform 2 interact with alpha-, beta- and gamma-tubulins. Interacts with TENT5C; the interaction has no effect on TENT5C poly(A) polymerase function. In terms of tissue distribution, expressed at high levels in testis and skeletal muscle and at lower levels in brain, heart, kidney, liver, lung, ovary, pancreas, placenta, and spleen.

It localises to the nucleus. It is found in the cytoplasm. The protein localises to the cytoskeleton. The protein resides in the microtubule organizing center. Its subcellular location is the centrosome. It localises to the centriole. It is found in the spindle pole. Functionally, during interphase, required for microtubule organizing and anchoring activities. During mitosis, required for the organization and stabilization of the spindle pole. Isoform 2/alpha is particularly important for the regulation of microtubule anchoring, microtubule stability, spindle architecture and spindle orientation, compared to isoform 1/beta. May promote cell cycle arrest by enhancing the inhibition of CDK2 activity by CDKN1A. May be required for repair of DNA damage by homologous recombination in conjunction with BRCA2. May not be involved in non-homologous end joining (NHEJ). The protein is BRCA2 and CDKN1A-interacting protein (BCCIP) of Homo sapiens (Human).